The sequence spans 1088 residues: MSVWNYAVTAQKPTCVTHSCVGNFTSPQELNLIVAKSTRIEIHLLSPQGLQTILDVPLYGRIATMELFRPHGEAQDFLFVATERYKFCVLQWDYESSELITRAMGDVSDRIGRPTDNGQIGIIDPDCRVIGLHLYDGLFKVIPFDNKGQLKEAFNIRLEELQVLDIKFLYGCTKPTIAVLYQDNKDARHVKTYEVSLKDKNFVEGPWSQNNLDNGADLLIPVPSPLCGVLIIGEETIVYCSANAFKAIPIRPSITKAYGRVDLDGSRYLLGDHAGLIHLLVITHEKEKVTGLKIELLGETSIASSISYLDNAVVFVGSSYGDSQLIKLNLQPDAKGSYVEILEKYVNLGPIVDFCVVDLERQGQGQVVTCSGAYKDGSLRIVRNGIGINEQASVELQGIKGMWSLKSSIDEAFDTFLVVSFISETRILAMNIEDELEETEIEGFLSEVQTLFCHDAVYNQLVQVTSNSVRLVSSTTRELRNKWDAPAGFSVNVATANASQVLLATGGGHLVYLEIGDGTLTEVKHVLLEYEVSCLDINPIGDNPNYSQLAAVGMWTDISVRIFVLPDLTLITKEELGGEIIPRSVLLCAFEGISYLLCALGDGHLLNFQLDTSCGKLRDRKKVSLGTRPITLRTFSSKSATHVFAASDRPAVIYSNNKKLLYSNVNLKEVSHMCPFNSAAFPDSLAIAREGELTIGTIDDIQKLHIRTIPIGEHARRICHQEQTRTFAISCLRNEPSAEESESHFVRLLDAQSFEFLSSYPLDAFECGCSILSCSFTDDKNVYYCVGTAYVLPEENEPTKGRILVFIVEEGRLQLITEKETKGAVYSLNAFNGKLLASINQKIQLYKWMLRDDGTRELQSECGHHGHILALYVQTRGDFIAVGDLMKSISLLIYKHEEGAIEERARDYNANWMTAVEILNDDIYLGTDNCFNIFTVKKNNEGATDEERARMEVVGEYHIGEFVNRFRHGSLVMKLPDSDIGQIPTVIFGTVSGMIGVIASLPQEQYAFLEKLQTSLRKVIKGVGGLSHEQWRSFNNEKRTAEAKGYLDGDLIESFLDLSRGKMEEISKGMDVQVEELCKRVEELTRLH.

This sequence belongs to the DDB1 family. Interacts with DDA1. Binds to KTN80.2/DWA3. Interacts with HTD1.

The protein localises to the nucleus. The protein operates within protein modification; protein ubiquitination. Its function is as follows. Component of light signal transduction machinery. Involved in repression of photomorphogenesis in darkness. Plays a role in DNA repair by forming with DDB2 the UV-damaged DNA-binding protein complex (UV-DDB). The sequence is that of DNA damage-binding protein 1b from Arabidopsis thaliana (Mouse-ear cress).